The sequence spans 161 residues: Nucleotide-binding protein Lferr_1091 (161 aa).

This sequence belongs to the YajQ family.

Functionally, nucleotide-binding protein. This Acidithiobacillus ferrooxidans (strain ATCC 53993 / BNL-5-31) (Leptospirillum ferrooxidans (ATCC 53993)) protein is Nucleotide-binding protein Lferr_1091.